The chain runs to 242 residues: Cysteine desulfuration protein SufE (242 aa).

The active-site Cysteine persulfide intermediate is the C148.

The protein belongs to the SufE family. In terms of assembly, monomer. Interacts with SufS; interaction enhances cysteine desulfurase activity of SufS.

It localises to the plastid. The protein resides in the apicoplast. It functions in the pathway cofactor biosynthesis; iron-sulfur cluster biosynthesis. In terms of biological role, participates in sulfur mobilization (SUF) pathway for iron-sulfur (Fe-S) cluster biogenesis. Enhances cysteine desulfurase activity of SufS. Probably functions as a sulfur acceptor for SufS. The polypeptide is Cysteine desulfuration protein SufE (Plasmodium vivax).